Consider the following 720-residue polypeptide: Cyclic nucleotide-gated ion channel 17 (720 aa).

The Cytoplasmic segment spans residues 1–85 (MELRKDKLLM…SEIVLKWNWV (85 aa)). A helical transmembrane segment spans residues 86–106 (FIVSCMVALFIDPLYFFVPAI). Topologically, residues 107–121 (GGDKNYPCARTDTSL) are extracellular. Residues 122-142 (SILVTFFRTIADLFYLLHIFI) traverse the membrane as a helical segment. Residues 143–178 (KFRTGFIAPNSSTRVFGRGELVMDPKAIAWRYIKSD) are Cytoplasmic-facing. Residues 179–199 (FIIDLIATLPLPQIVIWFVIS) traverse the membrane as a helical segment. At 200 to 211 (TTKSYRFDHNNN) the chain is on the extracellular side. A helical transmembrane segment spans residues 212 to 232 (AIALIVLLQYIPRFYLIIPLS). The Cytoplasmic portion of the chain corresponds to 233–252 (SQIVKATGVVTKTAWAGAAY). Residues 253–273 (NLLLYMLASHVLGAAWYILSV) traverse the membrane as a helical segment. The Extracellular segment spans residues 274–377 (DRYTSCWKSR…LSTTMFMGET (104 aa)). The helical transmembrane segment at 378–398 (TFAVLIAIFGLVLFAHLIGNM) threads the bilayer. The Cytoplasmic segment spans residues 399 to 720 (QTYLQSLTVR…EPDFSAEHDD (322 aa)). Residues 481–605 (FFSQ…SKKL) and Glu-552 contribute to the a nucleoside 3',5'-cyclic phosphate site. The segment at 597-612 (FRRLHSKKLQHTFRFY) is calmodulin-binding. One can recognise an IQ domain in the interval 617-646 (RTWAACFIQAAWRRYKRRVMENNLTAIESM).

The protein belongs to the cyclic nucleotide-gated cation channel (TC 1.A.1.5) family. In terms of assembly, homotetramer or heterotetramer. Part of a functional complex containing PSKR1, BAK1, CNGC17, and AHA. Interacts with AHA1, AHA2, and BAK1, but not with PSKR1 or BRI1.

It localises to the cell membrane. In terms of biological role, probable cyclic nucleotide-gated ion channel. Forms a functional cation-translocating unit with AHAs that is activated by PSKR1/BAK1 and possibly other BAK1/RLK complexes. Required for PSK-induced protoplast expansion. This Arabidopsis thaliana (Mouse-ear cress) protein is Cyclic nucleotide-gated ion channel 17.